Reading from the N-terminus, the 126-residue chain is Small ribosomal subunit protein uS13 (126 aa).

The segment at 98–126 is disordered; that stretch reads VRGQSTKNNARTRKGKRKTVANKKKAAKK. A compositionally biased stretch (basic residues) spans 107–126; the sequence is ARTRKGKRKTVANKKKAAKK.

It belongs to the universal ribosomal protein uS13 family. As to quaternary structure, part of the 30S ribosomal subunit. Forms a loose heterodimer with protein S19. Forms two bridges to the 50S subunit in the 70S ribosome.

In terms of biological role, located at the top of the head of the 30S subunit, it contacts several helices of the 16S rRNA. In the 70S ribosome it contacts the 23S rRNA (bridge B1a) and protein L5 of the 50S subunit (bridge B1b), connecting the 2 subunits; these bridges are implicated in subunit movement. Contacts the tRNAs in the A and P-sites. The sequence is that of Small ribosomal subunit protein uS13 from Amoebophilus asiaticus (strain 5a2).